Consider the following 1062-residue polypeptide: Exportin-T (1062 aa).

The protein belongs to the exportin family.

It is found in the nucleus. The protein resides in the cytoplasm. In terms of biological role, tRNA nucleus export receptor which facilitates tRNA translocation across the nuclear pore complex. Involved in pre-tRNA splicing, probably by affecting the interaction of pre-tRNA with splicing endonuclease. This Vanderwaltozyma polyspora (strain ATCC 22028 / DSM 70294 / BCRC 21397 / CBS 2163 / NBRC 10782 / NRRL Y-8283 / UCD 57-17) (Kluyveromyces polysporus) protein is Exportin-T (LOS1).